Here is a 1393-residue protein sequence, read N- to C-terminus: DNA-directed RNA polymerase subunit beta'' (1393 aa).

Residues Cys-224, Cys-295, Cys-302, and Cys-305 each contribute to the Zn(2+) site.

Belongs to the RNA polymerase beta' chain family. RpoC2 subfamily. In plastids the minimal PEP RNA polymerase catalytic core is composed of four subunits: alpha, beta, beta', and beta''. When a (nuclear-encoded) sigma factor is associated with the core the holoenzyme is formed, which can initiate transcription. Zn(2+) is required as a cofactor.

The protein localises to the plastid. Its subcellular location is the chloroplast. It catalyses the reaction RNA(n) + a ribonucleoside 5'-triphosphate = RNA(n+1) + diphosphate. In terms of biological role, DNA-dependent RNA polymerase catalyzes the transcription of DNA into RNA using the four ribonucleoside triphosphates as substrates. This is DNA-directed RNA polymerase subunit beta'' from Manihot esculenta (Cassava).